The following is a 283-amino-acid chain: Pantothenate synthetase (283 aa).

30 to 37 (MGNLHAGH) contacts ATP. H37 (proton donor) is an active-site residue. Residue Q61 participates in (R)-pantoate binding. A beta-alanine-binding site is contributed by Q61. An ATP-binding site is contributed by 149–152 (GEKD). Q155 serves as a coordination point for (R)-pantoate. Residues V178 and 186–189 (LSSR) each bind ATP.

It belongs to the pantothenate synthetase family. In terms of assembly, homodimer.

It is found in the cytoplasm. The enzyme catalyses (R)-pantoate + beta-alanine + ATP = (R)-pantothenate + AMP + diphosphate + H(+). It functions in the pathway cofactor biosynthesis; (R)-pantothenate biosynthesis; (R)-pantothenate from (R)-pantoate and beta-alanine: step 1/1. Its function is as follows. Catalyzes the condensation of pantoate with beta-alanine in an ATP-dependent reaction via a pantoyl-adenylate intermediate. This is Pantothenate synthetase from Pseudomonas aeruginosa (strain UCBPP-PA14).